The sequence spans 255 residues: MLTIADHEFSSRLFTGTGKFARPDLMAAAVEASGSRLVTMAIKRLEPGKRHDDILTPLLALGVKLLPNTSGAKTAAEAVFAAHLAREALGTNWLKLEIHPDPKYLLPDPIETLKAAEQLVKEGFVVLPYCGADPVLCKRLEEVGCAAVMPLGAPIGSNQGLVTRDFLAIIIEQARVPVVVDAGIGAPSHAAAAFELGADAVLVNTAIAVSRDPVAMGRAFALACEAGRSAYLAGLGARGLQASASSPLTDFLEAL.

K95 functions as the Schiff-base intermediate with DXP in the catalytic mechanism. Residues G156, 182–183 (AG), and 204–205 (NT) each bind 1-deoxy-D-xylulose 5-phosphate.

It belongs to the ThiG family. Homotetramer. Forms heterodimers with either ThiH or ThiS.

Its subcellular location is the cytoplasm. It catalyses the reaction [ThiS sulfur-carrier protein]-C-terminal-Gly-aminoethanethioate + 2-iminoacetate + 1-deoxy-D-xylulose 5-phosphate = [ThiS sulfur-carrier protein]-C-terminal Gly-Gly + 2-[(2R,5Z)-2-carboxy-4-methylthiazol-5(2H)-ylidene]ethyl phosphate + 2 H2O + H(+). It participates in cofactor biosynthesis; thiamine diphosphate biosynthesis. Catalyzes the rearrangement of 1-deoxy-D-xylulose 5-phosphate (DXP) to produce the thiazole phosphate moiety of thiamine. Sulfur is provided by the thiocarboxylate moiety of the carrier protein ThiS. In vitro, sulfur can be provided by H(2)S. This is Thiazole synthase from Aeromonas salmonicida (strain A449).